Consider the following 156-residue polypeptide: Small ribosomal subunit protein uS7 (156 aa).

The protein belongs to the universal ribosomal protein uS7 family. Part of the 30S ribosomal subunit. Contacts proteins S9 and S11.

Functionally, one of the primary rRNA binding proteins, it binds directly to 16S rRNA where it nucleates assembly of the head domain of the 30S subunit. Is located at the subunit interface close to the decoding center, probably blocks exit of the E-site tRNA. The protein is Small ribosomal subunit protein uS7 of Tremblaya princeps.